A 288-amino-acid chain; its full sequence is Polyamine aminopropyltransferase (288 aa).

The PABS domain maps to 9 to 238; the sequence is ETLHDQFGQY…GIMTFAWATD (230 aa). Residue glutamine 33 coordinates S-methyl-5'-thioadenosine. Residues histidine 64 and aspartate 88 each contribute to the spermidine site. Residues glutamate 108 and 140–141 each bind S-methyl-5'-thioadenosine; that span reads DG. Catalysis depends on aspartate 158, which acts as the Proton acceptor. 158–161 serves as a coordination point for spermidine; sequence DCTD. Residue proline 165 coordinates S-methyl-5'-thioadenosine.

The protein belongs to the spermidine/spermine synthase family. In terms of assembly, homodimer or homotetramer.

It is found in the cytoplasm. The enzyme catalyses S-adenosyl 3-(methylsulfanyl)propylamine + putrescine = S-methyl-5'-thioadenosine + spermidine + H(+). The protein operates within amine and polyamine biosynthesis; spermidine biosynthesis; spermidine from putrescine: step 1/1. Functionally, catalyzes the irreversible transfer of a propylamine group from the amino donor S-adenosylmethioninamine (decarboxy-AdoMet) to putrescine (1,4-diaminobutane) to yield spermidine. The protein is Polyamine aminopropyltransferase of Shigella dysenteriae serotype 1 (strain Sd197).